Consider the following 149-residue polypeptide: Myoglobin (149 aa).

N-acetylvaline is present on Val-2. Residues 2-143 (VDWEKVNSVW…ICSDIEKEYK (142 aa)) enclose the Globin domain. Heme b is bound at residue His-89.

It belongs to the globin family. As to quaternary structure, monomeric.

Its subcellular location is the cytoplasm. It is found in the sarcoplasm. It carries out the reaction Fe(III)-heme b-[protein] + nitric oxide + H2O = Fe(II)-heme b-[protein] + nitrite + 2 H(+). It catalyses the reaction H2O2 + AH2 = A + 2 H2O. Its function is as follows. Monomeric heme protein which primary function is to store oxygen and facilitate its diffusion within muscle tissues. Reversibly binds oxygen through a pentacoordinated heme iron and enables its timely and efficient release as needed during periods of heightened demand. Depending on the oxidative conditions of tissues and cells, and in addition to its ability to bind oxygen, it also has a nitrite reductase activity whereby it regulates the production of bioactive nitric oxide. Under stress conditions, like hypoxia and anoxia, it also protects cells against reactive oxygen species thanks to its pseudoperoxidase activity. In Mustelus antarcticus (Gummy shark), this protein is Myoglobin (mb).